Here is a 433-residue protein sequence, read N- to C-terminus: Actin-related protein 4 (433 aa).

Positions 289–317 (GSDEEMNEEPSKPIEQTENNEVSQQDSSV) are disordered. Positions 302-317 (IEQTENNEVSQQDSSV) are enriched in polar residues.

The protein belongs to the actin family. ARP4 subfamily. In terms of assembly, component of the NuA4 histone acetyltransferase complex, of the INO80 chromatin remodeling complex, and of the SWR1 chromatin remodeling complex.

Its subcellular location is the nucleus. In terms of biological role, chromatin interaction component of the NuA4 histone acetyltransferase complex which is involved in transcriptional activation of selected genes principally by acetylation of nucleosomal histone H4 and H2A. The NuA4 complex is also involved in DNA repair. Is required for NuA4 complex integrity. Component of the SWR1 complex which mediates the ATP-dependent exchange of histone H2A for the H2A variant HZT1 leading to transcriptional regulation of selected genes by chromatin remodeling. Component of the INO80 complex which remodels chromatin by shifting nucleosomes and is involved in DNA repair. The polypeptide is Actin-related protein 4 (alp5) (Schizosaccharomyces pombe (strain 972 / ATCC 24843) (Fission yeast)).